Consider the following 172-residue polypeptide: Agamous-like MADS-box protein AGL29 (172 aa).

The 61-residue stretch at 1 to 61 folds into the MADS-box domain; it reads MGRRKIKMEM…GKPFSYGKPN (61 aa). A coiled-coil region spans residues 86–123; sequence NYRPKLKRLSERLDLLNQEVEAEKERGEKSQEKLESAG. Residues 106 to 125 form a disordered region; that stretch reads EAEKERGEKSQEKLESAGDE.

Expressed in pollen.

The protein localises to the nucleus. Its function is as follows. Probable transcription factor. The chain is Agamous-like MADS-box protein AGL29 from Arabidopsis thaliana (Mouse-ear cress).